The sequence spans 512 residues: NAD-dependent deacetylase sir2A (512 aa).

The segment at 7–110 (IECIHLKDEY…EILENIKSSN (104 aa)) adopts a UBP-type zinc-finger fold. The Zn(2+) site is built by Cys9, His11, Cys34, Cys37, Cys46, Cys49, Cys54, His61, His65, His71, Cys84, and Cys87. Basic and acidic residues predominate over residues 113–122 (DKIVPKKDQK). The disordered stretch occupies residues 113–196 (DKIVPKKDQK…DESSSEGEES (84 aa)). Over residues 130-175 (VVPSASITTSSTTTSISKQTTVNNTTTTSSSSTTTTTTTTSTTINN) the composition is skewed to low complexity. Positions 176–195 (NEEEEESESETDESSSEGEE) are enriched in acidic residues. A Deacetylase sirtuin-type domain is found at 231–503 (CVLKKPTIEE…LDLIKLLGWE (273 aa)). Residue His361 is the Proton acceptor of the active site. Zn(2+)-binding residues include Cys369, Cys372, Cys393, and Cys399.

This sequence belongs to the sirtuin family. Zn(2+) serves as cofactor.

It carries out the reaction N(6)-acetyl-L-lysyl-[protein] + NAD(+) + H2O = 2''-O-acetyl-ADP-D-ribose + nicotinamide + L-lysyl-[protein]. NAD-dependent deacetylase, which plays an important role in the regulation of transcriptional repression. This Dictyostelium discoideum (Social amoeba) protein is NAD-dependent deacetylase sir2A (sir2A).